Reading from the N-terminus, the 338-residue chain is Large ribosomal subunit protein uL3 (338 aa).

Disordered stretches follow at residues 1–44 (MPQP…GFAG), 151–170 (AVPS…VGGG), 206–259 (VTKG…GQTG), and 312–338 (FRPA…SNQG). A compositionally biased stretch (polar residues) spans 22–31 (SETPRFNSWP). The segment covering 220-237 (GVQKRKGKHARQGWRRRI) has biased composition (basic residues). Positions 247-259 (RVRSTVPQQGQTG) are enriched in polar residues.

The protein belongs to the universal ribosomal protein uL3 family. Part of the 50S ribosomal subunit. Forms a cluster with proteins L14 and L24e. Interacts weakly with protein L13.

Its function is as follows. One of the primary rRNA binding proteins, it binds directly near the 3'-end of the 23S rRNA, where it nucleates assembly of the 50S subunit. This chain is Large ribosomal subunit protein uL3 (rpl3), found in Haloarcula marismortui (strain ATCC 43049 / DSM 3752 / JCM 8966 / VKM B-1809) (Halobacterium marismortui).